We begin with the raw amino-acid sequence, 240 residues long: Ubiquitin domain-containing protein 1 (240 aa).

Positions 1–48 (MGGCVGRPQGESQRSQSRASGQQRKRAGRNEPLKKERPRWKSDYPMTD) are disordered. The segment covering 12 to 22 (SQRSQSRASGQ) has biased composition (low complexity). Residues 28-42 (GRNEPLKKERPRWKS) show a composition bias toward basic and acidic residues. The region spanning 153-228 (FQLKVRLSTG…DTSYCKPATR (76 aa)) is the Ubiquitin-like domain.

May be involved in the regulation of cellular senescence through a positive feedback loop with TP53. This is Ubiquitin domain-containing protein 1 (ubtd1) from Xenopus tropicalis (Western clawed frog).